The primary structure comprises 405 residues: Tryptophan synthase beta chain (405 aa).

The residue at position 95 (Lys-95) is an N6-(pyridoxal phosphate)lysine.

Belongs to the TrpB family. Tetramer of two alpha and two beta chains. It depends on pyridoxal 5'-phosphate as a cofactor.

The catalysed reaction is (1S,2R)-1-C-(indol-3-yl)glycerol 3-phosphate + L-serine = D-glyceraldehyde 3-phosphate + L-tryptophan + H2O. It participates in amino-acid biosynthesis; L-tryptophan biosynthesis; L-tryptophan from chorismate: step 5/5. In terms of biological role, the beta subunit is responsible for the synthesis of L-tryptophan from indole and L-serine. This Pseudomonas putida (strain ATCC 700007 / DSM 6899 / JCM 31910 / BCRC 17059 / LMG 24140 / F1) protein is Tryptophan synthase beta chain.